Consider the following 159-residue polypeptide: Cyclic pyranopterin monophosphate synthase (159 aa).

Residues 75-77 (LCH) and 113-114 (ME) each bind substrate. Residue aspartate 128 is part of the active site.

It belongs to the MoaC family. As to quaternary structure, homohexamer; trimer of dimers.

The catalysed reaction is (8S)-3',8-cyclo-7,8-dihydroguanosine 5'-triphosphate = cyclic pyranopterin phosphate + diphosphate. It functions in the pathway cofactor biosynthesis; molybdopterin biosynthesis. Catalyzes the conversion of (8S)-3',8-cyclo-7,8-dihydroguanosine 5'-triphosphate to cyclic pyranopterin monophosphate (cPMP). The protein is Cyclic pyranopterin monophosphate synthase of Yersinia pseudotuberculosis serotype O:1b (strain IP 31758).